Consider the following 200-residue polypeptide: LexA repressor (200 aa).

A DNA-binding region (H-T-H motif) is located at residues Arg-28–Lys-48. Catalysis depends on for autocatalytic cleavage activity residues Ser-121 and Lys-158.

It belongs to the peptidase S24 family. As to quaternary structure, homodimer.

The catalysed reaction is Hydrolysis of Ala-|-Gly bond in repressor LexA.. Functionally, represses a number of genes involved in the response to DNA damage (SOS response), including recA and lexA. In the presence of single-stranded DNA, RecA interacts with LexA causing an autocatalytic cleavage which disrupts the DNA-binding part of LexA, leading to derepression of the SOS regulon and eventually DNA repair. This Hahella chejuensis (strain KCTC 2396) protein is LexA repressor.